The sequence spans 469 residues: 6-phosphofructo-2-kinase/fructose-2,6-bisphosphatase 4 (469 aa).

A 6-phosphofructo-2-kinase region spans residues 1 to 249 (MASPRELTQN…YYLMNIHVTP (249 aa)). Ser-29 is modified (phosphoserine; by PKC). Residue 46–54 (GLPARGKTY) coordinates ATP. Beta-D-fructose 6-phosphate contacts are provided by Arg-79 and Arg-103. Residue Asp-129 is part of the active site. 2 residues coordinate beta-D-fructose 6-phosphate: Thr-131 and Arg-137. Residue Cys-159 is part of the active site. ATP is bound at residue 168–173 (NIVQVK). Lys-173, Arg-194, and Tyr-198 together coordinate beta-D-fructose 6-phosphate. Residues 250–469 (RSIYLCRHGE…EALVTVPAHQ (220 aa)) form a fructose-2,6-bisphosphatase region. Arg-256 contributes to the beta-D-fructose 2,6-bisphosphate binding site. The active-site Tele-phosphohistidine intermediate is His-257. Beta-D-fructose 2,6-bisphosphate-binding residues include Asn-263, Gly-269, and Arg-306. The active-site Proton donor/acceptor is the Glu-326. 6 residues coordinate beta-D-fructose 2,6-bisphosphate: Tyr-337, Arg-351, Lys-355, Tyr-366, Gln-392, and Arg-396. ATP is bound at residue 348–351 (FALR). ATP-binding positions include 392–396 (QAVMR) and Tyr-428. Thr-444 carries the phosphothreonine; by PKC modification.

The protein in the C-terminal section; belongs to the phosphoglycerate mutase family. In terms of assembly, homodimer. In terms of tissue distribution, testis.

It carries out the reaction beta-D-fructose 2,6-bisphosphate + H2O = beta-D-fructose 6-phosphate + phosphate. It catalyses the reaction beta-D-fructose 6-phosphate + ATP = beta-D-fructose 2,6-bisphosphate + ADP + H(+). With respect to regulation, the most important regulatory mechanism of these opposing activities is by phosphorylation and dephosphorylation of the enzyme. Synthesis and degradation of fructose 2,6-bisphosphate. The polypeptide is 6-phosphofructo-2-kinase/fructose-2,6-bisphosphatase 4 (Pfkfb4) (Rattus norvegicus (Rat)).